Reading from the N-terminus, the 213-residue chain is Guanylate kinase (213 aa).

A Guanylate kinase-like domain is found at 10–189 (GLLLMVVAPS…AYADLAHIYH (180 aa)). Residue 17–24 (APSGVGKT) coordinates ATP.

This sequence belongs to the guanylate kinase family.

Its subcellular location is the cytoplasm. The catalysed reaction is GMP + ATP = GDP + ADP. In terms of biological role, essential for recycling GMP and indirectly, cGMP. This Caulobacter vibrioides (strain ATCC 19089 / CIP 103742 / CB 15) (Caulobacter crescentus) protein is Guanylate kinase (gmk).